A 546-amino-acid chain; its full sequence is Chaperonin GroEL (546 aa).

Residues 30–33, Lys51, 87–91, Gly415, 478–480, and Asp494 contribute to the ATP site; these read TMGP, DGTTT, and NAA.

This sequence belongs to the chaperonin (HSP60) family. Forms a cylinder of 14 subunits composed of two heptameric rings stacked back-to-back. Interacts with the co-chaperonin GroES.

The protein resides in the cytoplasm. It catalyses the reaction ATP + H2O + a folded polypeptide = ADP + phosphate + an unfolded polypeptide.. Together with its co-chaperonin GroES, plays an essential role in assisting protein folding. The GroEL-GroES system forms a nano-cage that allows encapsulation of the non-native substrate proteins and provides a physical environment optimized to promote and accelerate protein folding. This Wolinella succinogenes (strain ATCC 29543 / DSM 1740 / CCUG 13145 / JCM 31913 / LMG 7466 / NCTC 11488 / FDC 602W) (Vibrio succinogenes) protein is Chaperonin GroEL.